The following is a 301-amino-acid chain: Possible hemolysin C (301 aa).

CBS domains follow at residues 79 to 141 (MVPR…NFRL) and 144 to 201 (LIRK…IDDE).

The protein belongs to the UPF0053 family. Hemolysin C subfamily.

This is Possible hemolysin C (tlyC) from Rickettsia bellii (strain RML369-C).